The chain runs to 868 residues: Phospholipase D delta (868 aa).

In terms of domain architecture, C2 spans 1–154; sequence MAEKVSEDVM…ASGERISGWF (154 aa). A Ca(2+)-binding site is contributed by Asp216. The region spanning 368 to 403 is the PLD phosphodiesterase 1 domain; it reads TLFTHHQKCVLVDTQAVGNNRKVTAFIGGLDLCDGR. Residues His373, Lys375, and Asp380 contribute to the active site. Position 373 (His373) interacts with a 1,2-diacyl-sn-glycero-3-phosphate. Residues His409 and His440 each coordinate Ca(2+). Positions 588 and 718 each coordinate a 1,2-diacyl-sn-glycero-3-phosphate. Residues 713–740 enclose the PLD phosphodiesterase 2 domain; the sequence is FMIYVHAKGMIVDDEYVLMGSANINQRS. Catalysis depends on residues His718, Lys720, and Asp725. Glu781 contributes to the Ca(2+) binding site.

This sequence belongs to the phospholipase D family. C2-PLD subfamily. Interacts with GAPC1 and GAPC2. Increased interaction in the presence of H(2)O(2). The cofactor is Ca(2+). As to expression, expressed in roots, leaves, stems, siliques and flowers. Strongly expressed in the vascular tissues of cotyledons and leaves under dehydration stress conditions. Expression is higher in old leaves than in young leaves. Expressed in leaves and guard cells. The isoform 2 may not be present in siliques.

The protein localises to the cell membrane. The enzyme catalyses a 1,2-diacyl-sn-glycero-3-phosphocholine + H2O = a 1,2-diacyl-sn-glycero-3-phosphate + choline + H(+). Its activity is regulated as follows. Activated by free oleic acid in a dose-dependent manner and less effectively by other unsaturated fatty acids such as linoleic and linolenic acids. Not activated by the saturated fatty acids stearic and palmitic acids. PIP2 and Ca(2+) stimulate activity by promoting lipid substrate binding to the active site. Activated by H(2)O(2) and by binding to GAPC. Hydrolyzes glycerol-phospholipids at the terminal phosphodiesteric bond to generate phosphatidic acids (PA). May be involved in PA accumulation in the dehydration stress response and in the transduction of hormonal and environmental signals to the microtubules cytoskeleton. Prefers phosphatidylethanolamine to phosphatidylcholine as substrate. Involved in H(2)O(2) and abscisic acid (ABA)-induced stomatal closure. Involved in nitric oxide (NO) signaling during stomatal closure. Plays a positive role in ABA-promoted senescence. Involved in basal defense and nonhost resistance. The sequence is that of Phospholipase D delta from Arabidopsis thaliana (Mouse-ear cress).